A 1045-amino-acid chain; its full sequence is Cation efflux system protein CusA (1045 aa).

A run of 12 helical transmembrane segments spans residues 14 to 34 (FLVLMGALFLSIWGTWTIINT), 336 to 356 (LSGKLLEEFIVVAVVCALFLW), 361 to 381 (ALVAIISLPLGLCIAFIVMHF), 388 to 408 (IMSLGGIAIAVGAMVDAAIVM), 444 to 464 (VGPALFISLLIITLSFIPIFT), 483 to 503 (AMAGAALLAIVVIPILMGYWI), 530 to 550 (VLHWPKTTLLVAALSVLTVLW), 869 to 889 (KLKLMVPMTLMIIFVLLYLAF), 896 to 916 (LLIISSVPFALVGGIWLLWWM), 926 to 946 (TGFIALAGVAAEFGVVMLMYL), 983 to 1003 (AMTVAVIIAGLLPILWGTGAG), and 1010 to 1030 (IAAPMIGGMITAPLLSLFIIP).

The protein belongs to the resistance-nodulation-cell division (RND) (TC 2.A.6) family. In terms of assembly, the cus efflux system is composed of CusA, CusB, CusC and CusF.

Its subcellular location is the cell inner membrane. In terms of biological role, part of a cation efflux system that mediates resistance to copper and silver. In Escherichia coli O157:H7, this protein is Cation efflux system protein CusA (cusA).